The primary structure comprises 370 residues: Protein PELPK1 (370 aa).

Positions 1 to 34 (MALMKKSLSAALLSSPLLIICLIALLADPFSVGA) are cleaved as a signal peptide. Repeat copies occupy residues 43–47 (PEIPK), 49–53 (PELPK), 54–58 (FEVPK), 60–64 (PEFPK), 65–69 (PELPK), 71–75 (PEFPK), 76–80 (PELPK), 82–86 (PEIPK), 87–91 (PELPK), 93–97 (PEIPK), 98–102 (PEETK), 104–108 (PDIPK), 109–113 (LELPK), 115–119 (PEIPK), 120–124 (PELPK), 126–130 (PEIPK), 131–135 (PELPK), 137–141 (PEIQK), 142–146 (PELPK), 148–152 (PEIPK), 153–157 (PELPK), 159–163 (PEIPK), 164–168 (PDLPK), 175–179 (PEVPK), 186–190 (PEAPK), 192–196 (PEIPK), 197–201 (PELPK), 203–207 (PEVPK), 214–218 (PEIQK), 219–223 (PELPK), 225–229 (PELPK), 231–235 (PEIQK), 236–240 (PELPK), 242–246 (PEVPK), 247–251 (LEAPK), 253–257 (PEIQK), 258–262 (PELPK), 264–268 (PELPK), 270–274 (PEIQK), 275–279 (PELPK), 281–285 (PEIQK), 286–290 (PELPK), 292–296 (PEVPK), 303–307 (PEVPK), 314–318 (PEIPK), 319–323 (PELPK), 325–329 (PEVPK), 330–334 (PELPK), 336–340 (PEITK), 344–348 (PEIPK), 355–359 (PQLPK), and 361–365 (PEFPK). A 52 X 5 AA tandem repeat of P-[DEGQ]-[AEFLIV]-[QPT]-K region spans residues 43-365 (PEIPKLPELP…QLPKLPEFPK (323 aa)). The span at 65–223 (PELPKLPEFP…PEIQKPELPK (159 aa)) shows a compositional bias: basic and acidic residues. The interval 65 to 370 (PELPKLPEFP…PEFPKVPGTP (306 aa)) is disordered. Basic and acidic residues predominate over residues 232 to 262 (EIQKPELPKLPEVPKLEAPKVPEIQKPELPK). 2 stretches are compositionally biased toward basic and acidic residues: residues 271 to 296 (EIQKPELPKMPEIQKPELPKVPEVPK) and 306 to 334 (PKSEAPKFPEIPKPELPKIPEVPKPELPK).

It is found in the secreted. The protein resides in the cell wall. Positive regulator of germination and plant growth. The protein is Protein PELPK1 of Arabidopsis thaliana (Mouse-ear cress).